The chain runs to 153 residues: MGIEEIRRYLPHRYPFLLIDRIIALETQNYIHALKNVTANEPFFQGHFPNKAVMPGVLVVEAMAQAAGILGVKSAKAAAGLPDEPEEDGIYFFVGIDKARFRKTVVPGDQLILEVKLLRSRRGIWSFDARATVDDAVVCTAEIMCTSAGKGAA.

His47 is a catalytic residue.

This sequence belongs to the thioester dehydratase family. FabZ subfamily.

Its subcellular location is the cytoplasm. It carries out the reaction a (3R)-hydroxyacyl-[ACP] = a (2E)-enoyl-[ACP] + H2O. Involved in unsaturated fatty acids biosynthesis. Catalyzes the dehydration of short chain beta-hydroxyacyl-ACPs and long chain saturated and unsaturated beta-hydroxyacyl-ACPs. This Dichelobacter nodosus (strain VCS1703A) protein is 3-hydroxyacyl-[acyl-carrier-protein] dehydratase FabZ.